The sequence spans 468 residues: Sulfate adenylyltransferase subunit 1 (468 aa).

In terms of domain architecture, tr-type G spans 22-239; the sequence is KELLRFLTCG…TVEIASDKNA (218 aa). Positions 31-38 are G1; that stretch reads GSVDDGKS. 31–38 lines the GTP pocket; sequence GSVDDGKS. Residues 89 to 93 are G2; sequence GITID. The tract at residues 110–113 is G3; sequence DTPG. Residues 110 to 114 and 165 to 168 contribute to the GTP site; these read DTPGH and NKMD. Residues 165–168 form a G4 region; that stretch reads NKMD. The G5 stretch occupies residues 202-204; that stretch reads SAL.

Belongs to the TRAFAC class translation factor GTPase superfamily. Classic translation factor GTPase family. CysN/NodQ subfamily. In terms of assembly, heterodimer composed of CysD, the smaller subunit, and CysN.

It carries out the reaction sulfate + ATP + H(+) = adenosine 5'-phosphosulfate + diphosphate. Its pathway is sulfur metabolism; hydrogen sulfide biosynthesis; sulfite from sulfate: step 1/3. In terms of biological role, with CysD forms the ATP sulfurylase (ATPS) that catalyzes the adenylation of sulfate producing adenosine 5'-phosphosulfate (APS) and diphosphate, the first enzymatic step in sulfur assimilation pathway. APS synthesis involves the formation of a high-energy phosphoric-sulfuric acid anhydride bond driven by GTP hydrolysis by CysN coupled to ATP hydrolysis by CysD. This chain is Sulfate adenylyltransferase subunit 1, found in Teredinibacter turnerae (strain ATCC 39867 / T7901).